A 500-amino-acid polypeptide reads, in one-letter code: tRNA nucleotidyltransferase cca1 (500 aa).

The segment at 122-139 (DYTNSNSSNKLVFGTPLE) is flexible loop. Positions 231–241 (ERIGVEVDKML) match the ERhxxExxxhh motif motif.

Belongs to the tRNA nucleotidyltransferase/poly(A) polymerase family.

It catalyses the reaction a tRNA precursor + 2 CTP = a tRNA with a 3' CC end + 2 diphosphate. TRNA nucleotidyltransferase involved in the synthesis of the tRNA CCA terminus. In contrast to what is usually observed in eukaryotes for which one enzyme synthesizes the whole tRNA CCA terminus, in S.pombe, cca1 specifically adds two cytidine residues to a tRNA substrate lacking this sequence while cca2 specifically adds the terminal adenosine residue thereby completing the CCA sequence. This is tRNA nucleotidyltransferase cca1 from Schizosaccharomyces pombe (strain 972 / ATCC 24843) (Fission yeast).